A 275-amino-acid chain; its full sequence is Ribosomal RNA small subunit methyltransferase A (275 aa).

6 residues coordinate S-adenosyl-L-methionine: N19, L21, G46, E71, D94, and N117.

This sequence belongs to the class I-like SAM-binding methyltransferase superfamily. rRNA adenine N(6)-methyltransferase family. RsmA subfamily.

Its subcellular location is the cytoplasm. The enzyme catalyses adenosine(1518)/adenosine(1519) in 16S rRNA + 4 S-adenosyl-L-methionine = N(6)-dimethyladenosine(1518)/N(6)-dimethyladenosine(1519) in 16S rRNA + 4 S-adenosyl-L-homocysteine + 4 H(+). Specifically dimethylates two adjacent adenosines (A1518 and A1519) in the loop of a conserved hairpin near the 3'-end of 16S rRNA in the 30S particle. May play a critical role in biogenesis of 30S subunits. This chain is Ribosomal RNA small subunit methyltransferase A, found in Burkholderia lata (strain ATCC 17760 / DSM 23089 / LMG 22485 / NCIMB 9086 / R18194 / 383).